Consider the following 351-residue polypeptide: Histidinol-phosphate aminotransferase 1 (351 aa).

Lys-210 is modified (N6-(pyridoxal phosphate)lysine).

The protein belongs to the class-II pyridoxal-phosphate-dependent aminotransferase family. Histidinol-phosphate aminotransferase subfamily. In terms of assembly, homodimer. Pyridoxal 5'-phosphate serves as cofactor.

The catalysed reaction is L-histidinol phosphate + 2-oxoglutarate = 3-(imidazol-4-yl)-2-oxopropyl phosphate + L-glutamate. It participates in amino-acid biosynthesis; L-histidine biosynthesis; L-histidine from 5-phospho-alpha-D-ribose 1-diphosphate: step 7/9. The sequence is that of Histidinol-phosphate aminotransferase 1 (hisC1) from Pasteurella multocida (strain Pm70).